A 140-amino-acid polypeptide reads, in one-letter code: Small ribosomal subunit protein uS12m (140 aa).

Belongs to the universal ribosomal protein uS12 family.

It localises to the mitochondrion. This Dictyostelium discoideum (Social amoeba) protein is Small ribosomal subunit protein uS12m (mrps12).